Here is a 71-residue protein sequence, read N- to C-terminus: Lantibiotic Flvbeta.c (71 aa).

Residues 1–33 (MENKFDMEKFKKLAAVVSEDELDTLLDETTVGA) constitute a propeptide, cleaved by FlvT. The segment at residues 35 to 39 (SSNDC) is a cross-link (lanthionine (Ser-Cys); by FlvM2). Ser36 is subject to 2,3-didehydroalanine (Ser); by FlvM2. 3 cross-links (beta-methyllanthionine (Thr-Cys); by FlvM2) span residues 54-60 (TSKFDWC), 62-65 (TGAC), and 66-69 (TTSC).

Post-translationally, contains LL-lanthionine and DL-beta-methyllanthionine, when coepressed in E.coli with the flavecin synthetase FlvM2.

Its subcellular location is the secreted. In terms of biological role, lanthionine-containing peptide antibiotic (lantibiotic) that is probably active on Gram-positive bacteria, since its analog [Del1]Flvbeta.c shows antibacterial activity against M.luteus. This activity is not synergistically enhanced by [Del2]Flvalpha.a, an analog of Flvalpha.a, which is encoded by the same operon than Flvbeta.c. The bactericidal activity of lantibiotics is based on depolarization of energized bacterial cytoplasmic membranes, initiated by the formation of aqueous transmembrane pores. The chain is Lantibiotic Flvbeta.c from Ruminococcus flavefaciens.